Here is a 242-residue protein sequence, read N- to C-terminus: Small ribosomal subunit protein uS2 (242 aa).

Belongs to the universal ribosomal protein uS2 family.

In Neisseria meningitidis serogroup C (strain 053442), this protein is Small ribosomal subunit protein uS2.